A 238-amino-acid chain; its full sequence is Survival of motor neuron-related-splicing factor 30 (238 aa).

Residues 72–132 (SWKVGDKCMA…KPVEEGRKAK (61 aa)) enclose the Tudor domain. Residues 142–160 (KKEMIAQQREYKKKKALKK) carry the Nuclear localization signal motif. At Ser201 the chain carries Phosphoserine. The residue at position 219 (Lys219) is an N6-acetyllysine.

The protein belongs to the SMN family. Associates with spliceosomes. Associates with U4/U5/U6 tri-snRNP and with U2 snRNP. Interacts (via Tudor domain) with SNRPD3 (via C-terminus); the interaction is direct. Detected at intermediate levels in skeletal muscle, and at low levels in heart and pancreas.

The protein resides in the nucleus speckle. The protein localises to the nucleus. It is found in the cajal body. Its function is as follows. Involved in spliceosome assembly. This chain is Survival of motor neuron-related-splicing factor 30 (SMNDC1), found in Homo sapiens (Human).